Consider the following 2582-residue polypeptide: Chromodomain-helicase-DNA-binding protein 8 (2582 aa).

Disordered regions lie at residues 22 to 111 (DDSF…PVLQ), 136 to 155 (MGVS…PSQS), 253 to 283 (VKGS…TQGE), and 349 to 377 (QKIQ…PLTL). Polar residues-rich tracts occupy residues 42 to 51 (SLDSLDQMNQ), 94 to 111 (DYTT…PVLQ), and 141 to 155 (TGVS…PSQS). Positions 255–267 (GSAPAGNPGAAGP) are enriched in low complexity. Pro residues predominate over residues 355-372 (PQPPSSQPQPQPQPPPSA). The residue at position 434 (Ser-434) is a Phosphoserine. 2 disordered regions span residues 475–585 (RARG…VKRK) and 598–617 (DEEE…PILP). The span at 495–518 (RPEEEGEKKRRKKSSGERLKEEKP) shows a compositional bias: basic and acidic residues. Phosphoserine occurs at positions 555 and 564. Basic residues predominate over residues 574–585 (QKRRSNRQVKRK). Lys-611 participates in a covalent cross-link: Glycyl lysine isopeptide (Lys-Gly) (interchain with G-Cter in SUMO). 2 consecutive Chromo domains span residues 644-711 (AIVD…AQMR) and 726-792 (VEVD…RVNR). The Helicase ATP-binding domain maps to 825 to 999 (LFNWYNRQNC…FSLLHFLEPS (175 aa)). 838–845 (DEMGLGKT) is a binding site for ATP. The DEAH box motif lies at 950-953 (DEAH). One can recognise a Helicase C-terminal domain in the interval 1139 to 1290 (LIDKLLPKLK…KAVLQSMSGR (152 aa)). 2 positions are modified to phosphoserine: Ser-1422 and Ser-1426. Residues 1694–1715 (EDPEYKPLQGPPKDPDDEGDPL) form a disordered region. Positions 1791–2304 (IARREKQQRW…LVELEVECME (514 aa)) are interaction with FAM124B. Residues Ser-1978 and Ser-1980 each carry the phosphoserine modification. A disordered region spans residues 1990–2019 (QCTSRTASPSPLRPDAPVEKSPEESTVQVP). The residue at position 1995 (Thr-1995) is a Phosphothreonine. Ser-1997, Ser-1999, and Ser-2010 each carry phosphoserine. Residue Lys-2027 forms a Glycyl lysine isopeptide (Lys-Gly) (interchain with G-Cter in SUMO2) linkage. Residues Ser-2040, Ser-2070, and Ser-2072 each carry the phosphoserine modification. A disordered region spans residues 2045-2120 (VRVGSSDTAP…RSRPKLYDEE (76 aa)). The span at 2065–2074 (EDEDDSDSEL) shows a compositional bias: acidic residues. The span at 2077 to 2096 (SKLSPSSSSSSSSSSSSSST) shows a compositional bias: low complexity. Positions 2104–2118 (EEKLTADRSRPKLYD) are enriched in basic and acidic residues. Phosphoserine occurs at positions 2184, 2202, and 2204. The tract at residues 2187 to 2233 (VTAGGILGPGNHLLDSPSLTPGEDGDSPVPTPRSGSAASMAEEEASA) is disordered. Thr-2206 is modified (phosphothreonine). Ser-2213 carries the post-translational modification Phosphoserine. Phosphothreonine is present on Thr-2217. The span at 2222–2233 (SAASMAEEEASA) shows a compositional bias: low complexity. Ser-2225 bears the Phosphoserine mark. Lys-2258 participates in a covalent cross-link: Glycyl lysine isopeptide (Lys-Gly) (interchain with G-Cter in SUMO2). A disordered region spans residues 2486–2582 (HVDSSTMLHH…NSDSSEDADD (97 aa)). Residues 2493–2511 (LHHHHHHPHPHHHHHHHPG) show a composition bias toward basic residues. Residues 2514–2529 (TTGYPSSPATTTSGTA) show a composition bias toward low complexity. Ser-2520 carries the post-translational modification Phosphoserine. Acidic residues predominate over residues 2537 to 2551 (PEDDDEEEDEEDDDL).

This sequence belongs to the SNF2/RAD54 helicase family. CHD8 subfamily. As to quaternary structure, interacts with CTNNB1 and PIAS3. Component of some MLL1/MLL complex, at least composed of the core components KMT2A/MLL1, ASH2L, HCFC1/HCF1, WDR5 and RBBP5, as well as the facultative components BACC1, CHD8, E2F6, HSP70, INO80C, KANSL1, LAS1L, MAX, MCRS1, MGA, KAT8/MOF, PELP1, PHF20, PRP31, RING2, RUVB1/TIP49A, RUVB2/TIP49B, SENP3, TAF1, TAF4, TAF6, TAF7, TAF9 and TEX10. Interacts with CHD7. Interacts with FAM124B. Interacts with p53/TP53 and histone H1. Interacts with CTCF. Interacts with TLK2. Interacts with HNRNPL in an RNA-dependent manner. In terms of processing, sumoylated.

The protein localises to the nucleus. It catalyses the reaction ATP + H2O = ADP + phosphate + H(+). In terms of biological role, ATP-dependent chromatin-remodeling factor, it slides nucleosomes along DNA; nucleosome sliding requires ATP. Acts as a transcription repressor by remodeling chromatin structure and recruiting histone H1 to target genes. Suppresses p53/TP53-mediated apoptosis by recruiting histone H1 and preventing p53/TP53 transactivation activity. Acts as a negative regulator of Wnt signaling pathway by regulating beta-catenin (CTNNB1) activity. Negatively regulates CTNNB1-targeted gene expression by being recruited specifically to the promoter regions of several CTNNB1 responsive genes. Involved in both enhancer blocking and epigenetic remodeling at chromatin boundary via its interaction with CTCF. Acts as a suppressor of STAT3 activity by suppressing the LIF-induced STAT3 transcriptional activity. Also acts as a transcription activator via its interaction with ZNF143 by participating in efficient U6 RNA polymerase III transcription. Regulates alternative splicing of a core group of genes involved in neuronal differentiation, cell cycle and DNA repair. Enables H3K36me3-coupled transcription elongation and co-transcriptional RNA processing likely via interaction with HNRNPL. The polypeptide is Chromodomain-helicase-DNA-binding protein 8 (Mus musculus (Mouse)).